Consider the following 54-residue polypeptide: Small ribosomal subunit protein uS14 (54 aa).

Residues Cys-19, Cys-22, Cys-37, and Cys-40 each coordinate Zn(2+).

The protein belongs to the universal ribosomal protein uS14 family. Zinc-binding uS14 subfamily. In terms of assembly, part of the 30S ribosomal subunit. The cofactor is Zn(2+).

Functionally, binds 16S rRNA, required for the assembly of 30S particles. The sequence is that of Small ribosomal subunit protein uS14 from Pyrobaculum aerophilum (strain ATCC 51768 / DSM 7523 / JCM 9630 / CIP 104966 / NBRC 100827 / IM2).